The primary structure comprises 365 residues: UDP-N-acetylglucosamine--N-acetylmuramyl-(pentapeptide) pyrophosphoryl-undecaprenol N-acetylglucosamine transferase (365 aa).

Residues 12 to 14, Asn-123, Arg-166, Ser-194, and Gln-295 contribute to the UDP-N-acetyl-alpha-D-glucosamine site; that span reads TGG.

The protein belongs to the glycosyltransferase 28 family. MurG subfamily.

The protein localises to the cell inner membrane. It catalyses the reaction di-trans,octa-cis-undecaprenyl diphospho-N-acetyl-alpha-D-muramoyl-L-alanyl-D-glutamyl-meso-2,6-diaminopimeloyl-D-alanyl-D-alanine + UDP-N-acetyl-alpha-D-glucosamine = di-trans,octa-cis-undecaprenyl diphospho-[N-acetyl-alpha-D-glucosaminyl-(1-&gt;4)]-N-acetyl-alpha-D-muramoyl-L-alanyl-D-glutamyl-meso-2,6-diaminopimeloyl-D-alanyl-D-alanine + UDP + H(+). It participates in cell wall biogenesis; peptidoglycan biosynthesis. Its function is as follows. Cell wall formation. Catalyzes the transfer of a GlcNAc subunit on undecaprenyl-pyrophosphoryl-MurNAc-pentapeptide (lipid intermediate I) to form undecaprenyl-pyrophosphoryl-MurNAc-(pentapeptide)GlcNAc (lipid intermediate II). This chain is UDP-N-acetylglucosamine--N-acetylmuramyl-(pentapeptide) pyrophosphoryl-undecaprenol N-acetylglucosamine transferase, found in Phenylobacterium zucineum (strain HLK1).